The following is a 245-amino-acid chain: DNA terminal protein (245 aa).

Residues 4-55 carry the Nuclear localization signal motif; that stretch reads KRLKKKLETKRKKSLLVSEGYSKKETKKLKGRELETVYKKKAHNRKNRERAR. O-(5'-phospho-DNA)-tyrosine is present on Y194.

Interacts with the DNA-binding protein P1.

It localises to the virion. Functionally, acts as a primer for viral genomic replication. DNA terminal protein is covalently linked to the 5'-ends of both strands of the genome through a phosphodiester bond between the beta-hydroxyl group of a tyrosine residue and the 5'-phosphate of the terminal deoxythymidylate. This protein is essential for DNA replication and is involved in the priming of DNA elongation. This chain is DNA terminal protein, found in Bacillus thuringiensis (Bacillus thuringiensis bacteriophage Bam35c).